A 392-amino-acid chain; its full sequence is Alkaline phosphatase L (392 aa).

The first 23 residues, 1–23 (MYKRSLIAASLSVAALVSAQAMA), serve as a signal peptide directing secretion.

Belongs to the PstS family. In terms of assembly, homodimer.

The protein localises to the secreted. Its subcellular location is the periplasm. The catalysed reaction is a phosphate monoester + H2O = an alcohol + phosphate. Has both a phosphomonoesterase and phosphodiesterase activity. This chain is Alkaline phosphatase L, found in Pseudomonas aeruginosa (strain UCBPP-PA14).